The sequence spans 260 residues: Metallo-beta-lactamase domain-containing protein 1 (260 aa).

Zn(2+) is bound by residues His-118, His-120, Asp-122, His-123, His-173, Asp-196, and His-235.

It belongs to the metallo-beta-lactamase superfamily. Glyoxalase II family. Homodimer. It depends on Zn(2+) as a cofactor.

The protein localises to the cytoplasm. Its subcellular location is the cytosol. It localises to the nucleus. The catalysed reaction is a ribonucleotidyl-ribonucleotide-RNA + H2O = a 3'-end ribonucleotide-RNA + a 5'-end 5'-phospho-ribonucleoside-RNA + H(+). Endoribonuclease that catalyzes the hydrolysis of histone-coding pre-mRNA 3'-end. Involved in histone pre-mRNA processing during the S-phase of the cell cycle, which is required for entering/progressing through S-phase. Cleaves histone pre-mRNA at a major and a minor cleavage site after the 5'-ACCCA-3' and the 5'-ACCCACA-3' sequence, respectively, and located downstream of the stem-loop. May require the presence of the HDE element located at the histone pre-RNA 3'-end to avoid non-specific cleavage. This Mus musculus (Mouse) protein is Metallo-beta-lactamase domain-containing protein 1.